Consider the following 457-residue polypeptide: Argininosuccinate lyase (457 aa).

The protein belongs to the lyase 1 family. Argininosuccinate lyase subfamily.

Its subcellular location is the cytoplasm. It catalyses the reaction 2-(N(omega)-L-arginino)succinate = fumarate + L-arginine. It functions in the pathway amino-acid biosynthesis; L-arginine biosynthesis; L-arginine from L-ornithine and carbamoyl phosphate: step 3/3. The protein is Argininosuccinate lyase of Escherichia coli O1:K1 / APEC.